The chain runs to 770 residues: Elongation factor G, mitochondrial (770 aa).

Residues 1 to 24 (MLKLSFRSLTSRLPRLSTLVVRGY) constitute a mitochondrion transit peptide. The tr-type G domain occupies 57–353 (KQIRNIGISA…AVCDYLPNPS (297 aa)). Residues 66–73 (AHIDSGKT), 151–155 (DTPGH), and 205–208 (NKMD) each bind GTP.

It belongs to the TRAFAC class translation factor GTPase superfamily. Classic translation factor GTPase family. EF-G/EF-2 subfamily.

The protein resides in the mitochondrion. It functions in the pathway protein biosynthesis; polypeptide chain elongation. Mitochondrial GTPase that catalyzes the GTP-dependent ribosomal translocation step during translation elongation. During this step, the ribosome changes from the pre-translocational (PRE) to the post-translocational (POST) state as the newly formed A-site-bound peptidyl-tRNA and P-site-bound deacylated tRNA move to the P and E sites, respectively. Catalyzes the coordinated movement of the two tRNA molecules, the mRNA and conformational changes in the ribosome. The sequence is that of Elongation factor G, mitochondrial (mef1) from Schizosaccharomyces pombe (strain 972 / ATCC 24843) (Fission yeast).